A 137-amino-acid chain; its full sequence is uncharacterized protein (137 aa).

Positions 4–73 (MLTVSEVARK…LEEIADILHL (70 aa)) constitute an HTH merR-type domain. The segment at residues 8 to 27 (SEVARKLGLNPQTLYFYERI) is a DNA-binding region (H-T-H motif).

This is an uncharacterized protein from Synechocystis sp. (strain ATCC 27184 / PCC 6803 / Kazusa).